We begin with the raw amino-acid sequence, 1377 residues long: DNA-directed RNA polymerase subunit beta'' (1377 aa).

The Zn(2+) site is built by Cys-220, Cys-291, Cys-298, and Cys-301.

The protein belongs to the RNA polymerase beta' chain family. RpoC2 subfamily. In plastids the minimal PEP RNA polymerase catalytic core is composed of four subunits: alpha, beta, beta', and beta''. When a (nuclear-encoded) sigma factor is associated with the core the holoenzyme is formed, which can initiate transcription. Requires Zn(2+) as cofactor.

It localises to the plastid. The protein resides in the chloroplast. It catalyses the reaction RNA(n) + a ribonucleoside 5'-triphosphate = RNA(n+1) + diphosphate. In terms of biological role, DNA-dependent RNA polymerase catalyzes the transcription of DNA into RNA using the four ribonucleoside triphosphates as substrates. This Nandina domestica (Heavenly bamboo) protein is DNA-directed RNA polymerase subunit beta''.